The primary structure comprises 226 residues: Biosynthetic peptidoglycan transglycosylase (226 aa).

The helical transmembrane segment at 7–29 (VMALSAIGLLLLPYLLTPLYRIG) threads the bilayer.

This sequence belongs to the glycosyltransferase 51 family.

It is found in the cell inner membrane. It catalyses the reaction [GlcNAc-(1-&gt;4)-Mur2Ac(oyl-L-Ala-gamma-D-Glu-L-Lys-D-Ala-D-Ala)](n)-di-trans,octa-cis-undecaprenyl diphosphate + beta-D-GlcNAc-(1-&gt;4)-Mur2Ac(oyl-L-Ala-gamma-D-Glu-L-Lys-D-Ala-D-Ala)-di-trans,octa-cis-undecaprenyl diphosphate = [GlcNAc-(1-&gt;4)-Mur2Ac(oyl-L-Ala-gamma-D-Glu-L-Lys-D-Ala-D-Ala)](n+1)-di-trans,octa-cis-undecaprenyl diphosphate + di-trans,octa-cis-undecaprenyl diphosphate + H(+). The protein operates within cell wall biogenesis; peptidoglycan biosynthesis. Functionally, peptidoglycan polymerase that catalyzes glycan chain elongation from lipid-linked precursors. This chain is Biosynthetic peptidoglycan transglycosylase, found in Nitrobacter winogradskyi (strain ATCC 25391 / DSM 10237 / CIP 104748 / NCIMB 11846 / Nb-255).